The chain runs to 89 residues: Putative septation protein SpoVG (89 aa).

This sequence belongs to the SpoVG family.

Functionally, could be involved in septation. This is Putative septation protein SpoVG from Heliobacterium modesticaldum (strain ATCC 51547 / Ice1).